Consider the following 782-residue polypeptide: Probable cyclic di-GMP phosphodiesterase PdeI (782 aa).

The next 2 helical transmembrane spans lie at 12 to 32 (LIIL…IINY) and 286 to 306 (LFYL…LMTT). The region spanning 527 to 781 (NIWIARNIRH…AWDKSGKLVK (255 aa)) is the EAL domain.

It localises to the cell membrane. The enzyme catalyses 3',3'-c-di-GMP + H2O = 5'-phosphoguanylyl(3'-&gt;5')guanosine + H(+). Its function is as follows. Phosphodiesterase (PDE) that catalyzes the hydrolysis of cyclic-di-GMP (c-di-GMP) to 5'-pGpG. Overexpression reduces biofilm formation. Cyclic-di-GMP is a second messenger which controls cell surface-associated traits in bacteria. This is Probable cyclic di-GMP phosphodiesterase PdeI from Escherichia coli (strain K12).